The sequence spans 413 residues: Multifunctional CCA protein (413 aa).

The ATP site is built by Gly8 and Arg11. Gly8 and Arg11 together coordinate CTP. The Mg(2+) site is built by Asp21 and Asp23. 3 residues coordinate ATP: Arg91, Arg137, and Arg140. 3 residues coordinate CTP: Arg91, Arg137, and Arg140. An HD domain is found at 228 to 329 (TGIHTLMTLS…VKLFDSIDAW (102 aa)).

It belongs to the tRNA nucleotidyltransferase/poly(A) polymerase family. Bacterial CCA-adding enzyme type 1 subfamily. In terms of assembly, monomer. Can also form homodimers and oligomers. Mg(2+) serves as cofactor. It depends on Ni(2+) as a cofactor.

It carries out the reaction a tRNA precursor + 2 CTP + ATP = a tRNA with a 3' CCA end + 3 diphosphate. The catalysed reaction is a tRNA with a 3' CCA end + 2 CTP + ATP = a tRNA with a 3' CCACCA end + 3 diphosphate. In terms of biological role, catalyzes the addition and repair of the essential 3'-terminal CCA sequence in tRNAs without using a nucleic acid template. Adds these three nucleotides in the order of C, C, and A to the tRNA nucleotide-73, using CTP and ATP as substrates and producing inorganic pyrophosphate. tRNA 3'-terminal CCA addition is required both for tRNA processing and repair. Also involved in tRNA surveillance by mediating tandem CCA addition to generate a CCACCA at the 3' terminus of unstable tRNAs. While stable tRNAs receive only 3'-terminal CCA, unstable tRNAs are marked with CCACCA and rapidly degraded. This chain is Multifunctional CCA protein, found in Citrobacter koseri (strain ATCC BAA-895 / CDC 4225-83 / SGSC4696).